Consider the following 171-residue polypeptide: 3-hydroxydecanoyl-[acyl-carrier-protein] dehydratase (171 aa).

His-70 is an active-site residue.

Belongs to the thioester dehydratase family. FabA subfamily. As to quaternary structure, homodimer.

Its subcellular location is the cytoplasm. It catalyses the reaction a (3R)-hydroxyacyl-[ACP] = a (2E)-enoyl-[ACP] + H2O. The enzyme catalyses (3R)-hydroxydecanoyl-[ACP] = (2E)-decenoyl-[ACP] + H2O. The catalysed reaction is (2E)-decenoyl-[ACP] = (3Z)-decenoyl-[ACP]. It participates in lipid metabolism; fatty acid biosynthesis. Its function is as follows. Necessary for the introduction of cis unsaturation into fatty acids. Catalyzes the dehydration of (3R)-3-hydroxydecanoyl-ACP to E-(2)-decenoyl-ACP and then its isomerization to Z-(3)-decenoyl-ACP. Can catalyze the dehydratase reaction for beta-hydroxyacyl-ACPs with saturated chain lengths up to 16:0, being most active on intermediate chain length. The polypeptide is 3-hydroxydecanoyl-[acyl-carrier-protein] dehydratase (Colwellia psychrerythraea (strain 34H / ATCC BAA-681) (Vibrio psychroerythus)).